The sequence spans 140 residues: MTYVILPLEMKKGRGYVYQLEYHLIWCVKYRHQVLVGEVADGLKDILRDIAAQNGLEVITMEVMPDHVHLLLSATPQQAIPDFVKALKGASARRMFVAYPQLKEKLWGGNLWNPSYCILTVSENTRAQIQKYIESQHDKE.

Residues histidine 67 and histidine 69 each coordinate Mg(2+). A mobile alpha helix region spans residues alanine 127 to isoleucine 133. Tyrosine 132 serves as the catalytic Nucleophile. Glutamine 136 is a Mg(2+) binding site.

The protein belongs to the transposase 17 family. Homodimer. It depends on Mg(2+) as a cofactor.

Its activity is regulated as follows. Both the excision and insertion steps are inhibited by TnpB. In terms of biological role, a transposase that is part of insertion sequence (IS) element ISDra2, it is necessary and sufficient for both transposon excision and insertion of ISDra2. This protein alone can be provided in trans and allows transposition of an empty IS element (tnpA or tnpA-tnpB replaced by a selectable marker). ISDra2 binds subterminal imperfect palindromes at the left (LE) and right (RE) ends of the element and cleaves only the 'top strand' which is circularized and subsequently reinserted into the DNA target. This is called a 'peel and paste' mechanism and increases the copy number of the IS. Transposition is linked to DNA replication in the absence of irradiation, with maximal activity when the 'top strand' is on the replication lagging strand, and occurs preferentially on the lagging strand. The IS element inserts 3' of the target sequence 5'-TTGAT-3'; target duplication has not been observed. The protein is ISDra2 transposase TnpA of Deinococcus radiodurans (strain ATCC 13939 / DSM 20539 / JCM 16871 / CCUG 27074 / LMG 4051 / NBRC 15346 / NCIMB 9279 / VKM B-1422 / R1).